A 159-amino-acid chain; its full sequence is Protein-export protein SecB (159 aa).

Belongs to the SecB family. As to quaternary structure, homotetramer, a dimer of dimers. One homotetramer interacts with 1 SecA dimer.

The protein localises to the cytoplasm. Functionally, one of the proteins required for the normal export of preproteins out of the cell cytoplasm. It is a molecular chaperone that binds to a subset of precursor proteins, maintaining them in a translocation-competent state. It also specifically binds to its receptor SecA. In Nitrobacter hamburgensis (strain DSM 10229 / NCIMB 13809 / X14), this protein is Protein-export protein SecB.